Here is a 645-residue protein sequence, read N- to C-terminus: DNA ligase (645 aa).

NAD(+)-binding positions include D30 to D34 and S72 to Q73. The active-site N6-AMP-lysine intermediate is K99. The NAD(+) site is built by R120, E163, K275, and K296. Zn(2+) contacts are provided by C387, C390, C403, and C408. Positions E564–V645 constitute a BRCT domain.

Belongs to the NAD-dependent DNA ligase family. LigA subfamily. The cofactor is Mg(2+). Mn(2+) is required as a cofactor.

It carries out the reaction NAD(+) + (deoxyribonucleotide)n-3'-hydroxyl + 5'-phospho-(deoxyribonucleotide)m = (deoxyribonucleotide)n+m + AMP + beta-nicotinamide D-nucleotide.. Its function is as follows. DNA ligase that catalyzes the formation of phosphodiester linkages between 5'-phosphoryl and 3'-hydroxyl groups in double-stranded DNA using NAD as a coenzyme and as the energy source for the reaction. It is essential for DNA replication and repair of damaged DNA. The chain is DNA ligase from Treponema denticola (strain ATCC 35405 / DSM 14222 / CIP 103919 / JCM 8153 / KCTC 15104).